A 144-amino-acid polypeptide reads, in one-letter code: MNPYEQYMQELAQQMRAELTENGFESLETSEDVSNYMKNVNEEDTTFVVINSTCGCAAGLARPAAVAVAEQNDKKPTNKITVFAGQDKEATQTMREYIQQVPSSPSYALFKGTELKHFIPREHIEGRDIQDICMDIKDAFDENC.

Belongs to the bacilliredoxin family.

This is Bacilliredoxin SH1478 from Staphylococcus haemolyticus (strain JCSC1435).